The chain runs to 233 residues: Small ribosomal subunit protein uS3 (233 aa).

One can recognise a KH type-2 domain in the interval 39–107 (VRQFLNKELE…PAQINIAEVR (69 aa)).

Belongs to the universal ribosomal protein uS3 family. In terms of assembly, part of the 30S ribosomal subunit. Forms a tight complex with proteins S10 and S14.

Functionally, binds the lower part of the 30S subunit head. Binds mRNA in the 70S ribosome, positioning it for translation. The chain is Small ribosomal subunit protein uS3 from Edwardsiella ictaluri (strain 93-146).